A 274-amino-acid polypeptide reads, in one-letter code: GCN5-related N-acetyltransferase 7, chloroplastic (274 aa).

A chloroplast-targeting transit peptide spans 1–65 (MAFLCSSLPS…STFVISESVS (65 aa)). The N-acetyltransferase domain occupies 75-267 (LRVRTFNELN…QRLLLWLALP (193 aa)). Acetyl-CoA is bound by residues 189-191 (VCV), 197-202 (RNGVGY), 228-230 (NEA), and Tyr235. Tyr235 acts as the Proton donor in catalysis.

Belongs to the acetyltransferase family. GNAT subfamily. As to quaternary structure, oligomer. Post-translationally, autoacetylated. In terms of tissue distribution, expressed in green tissues.

It is found in the plastid. The protein resides in the chloroplast. The enzyme catalyses an N-terminal L-alpha-aminoacyl-[protein] + acetyl-CoA = N-terminal N(alpha)-acetyl-L-alpha-aminoacyl-[protein] + CoA + H(+). It catalyses the reaction L-lysyl-[protein] + acetyl-CoA = N(6)-acetyl-L-lysyl-[protein] + CoA + H(+). The catalysed reaction is N-terminal L-alanyl-[protein] + acetyl-CoA = N-terminal N(alpha)-acetyl-L-alanyl-[protein] + CoA + H(+). It carries out the reaction N-terminal L-seryl-[protein] + acetyl-CoA = N-terminal N(alpha)-acetyl-L-seryl-[protein] + CoA + H(+). The enzyme catalyses N-terminal L-threonyl-[protein] + acetyl-CoA = N-terminal N(alpha)-acetyl-L-threonyl-[protein] + CoA + H(+). It catalyses the reaction N-terminal L-methionyl-[protein] + acetyl-CoA = N-terminal N(alpha)-acetyl-L-methionyl-[protein] + CoA + H(+). The catalysed reaction is N-terminal L-prolyl-[protein] + acetyl-CoA = N-terminal N(alpha)-acetyl-L-prolyl-[protein] + CoA + H(+). It carries out the reaction N-terminal L-valyl-[protein] + acetyl-CoA = N-terminal N(alpha)-acetyl-L-valyl-[protein] + CoA + H(+). Its function is as follows. Protein acetyltransferase with dual specificity triggering both N-alpha-acetylation (NTA), with a large spectrum of modified N-termini, including methionine, alanine, serine, threonine and to a lower extent valine and proline as substrates, and epsilon-lysine acetylation (KA). The chain is GCN5-related N-acetyltransferase 7, chloroplastic from Arabidopsis thaliana (Mouse-ear cress).